The chain runs to 75 residues: Disintegrin CTF-II (75 aa).

The region spanning glutamate 1 to leucine 75 is the Disintegrin domain. Disulfide bonds link cysteine 9/cysteine 24, cysteine 11/cysteine 19, cysteine 18/cysteine 41, cysteine 32/cysteine 38, cysteine 37/cysteine 62, and cysteine 50/cysteine 69. A Cell attachment site motif is present at residues arginine 54–aspartate 56.

It belongs to the venom metalloproteinase (M12B) family. P-II subfamily. P-IIa sub-subfamily. In terms of assembly, monomer (disintegrin). In terms of tissue distribution, expressed by the venom gland.

It is found in the secreted. Inhibits fibrinogen interaction with platelet receptors, and inhibits aggregation induced by ADP, thrombin, collagen and platelet-activating factor. Acts by binding to the alpha-IIb/beta-3 (ITGA2B/ITGB3) on the platelet surface. This Protobothrops flavoviridis (Habu) protein is Disintegrin CTF-II.